A 70-amino-acid chain; its full sequence is Protease inhibitor HPI (70 aa).

Ala-2 is modified (N-acetylalanine). The residue at position 5 (Cys-5) is an S-glutathionyl cysteine; alternate.

Belongs to the protease inhibitor I13 (potato type I serine protease inhibitor) family. Monomer and homodimer; disulfide-linked. Occurs in 3 forms that differ in the modification of Cys-5, HPI-1 forms a homodimer through a disulfide bond, HPI-2a is modified by glutathionylation, and HPI-2b is covalently modified by addition of an unidentified adduct but not by a disulfide linkage.

Its function is as follows. Inhibitor of serine proteases, strongly inhibits subtilisin A and weakly inhibits trypsin. Does not inhibit chymotrypsin, papain, pepsin, pronase E, protease type XIII and thermolysin. HPI-1 inhibits subtilisin A with an Ki of 0.21 nM. HPI-2a inhibits subtilisin A with an Ki of 0.08 nM. HPI-2b inhibits subtilisin A with an Ki of 0.1 nM. This chain is Protease inhibitor HPI, found in Hevea brasiliensis (Para rubber tree).